A 251-amino-acid polypeptide reads, in one-letter code: V-set and transmembrane domain-containing protein 2B (251 aa).

A signal peptide spans 1–25 (MEKQGLFSALCYLMLNTPLLFSVNA). One can recognise an Ig-like V-type domain in the interval 26-142 (TFTEVPKDVT…DETQEHKAQA (117 aa)). Residues 26–226 (TFTEVPKDVT…RQQHGSGTGP (201 aa)) are Extracellular-facing. Cys-46 and Cys-125 are oxidised to a cystine. The segment at 157-213 (AAEAVSHIQSSGPRRNNPSSRATPEPGNKRAVPPAENLAPSLSTAASSSASPAPGKA) is disordered. Low complexity-rich tracts occupy residues 166–177 (SSGPRRNNPSSR) and 195–213 (APSL…PGKA). Residues 227–247 (IFANDPALYMFLLIFHQLVYL) traverse the membrane as a helical segment. The Cytoplasmic segment spans residues 248-251 (LLNH).

Its subcellular location is the membrane. The sequence is that of V-set and transmembrane domain-containing protein 2B (vstm2b) from Xenopus tropicalis (Western clawed frog).